The following is a 271-amino-acid chain: Acetyl-coenzyme A carboxylase carboxyl transferase subunit alpha (271 aa).

In terms of domain architecture, CoA carboxyltransferase C-terminal spans 1–247 (MSRELIRTVD…KKTILEALGE (247 aa)).

Belongs to the AccA family. As to quaternary structure, acetyl-CoA carboxylase is a heterohexamer composed of biotin carboxyl carrier protein (AccB), biotin carboxylase (AccC) and two subunits each of ACCase subunit alpha (AccA) and ACCase subunit beta (AccD).

It localises to the cytoplasm. It carries out the reaction N(6)-carboxybiotinyl-L-lysyl-[protein] + acetyl-CoA = N(6)-biotinyl-L-lysyl-[protein] + malonyl-CoA. It functions in the pathway lipid metabolism; malonyl-CoA biosynthesis; malonyl-CoA from acetyl-CoA: step 1/1. In terms of biological role, component of the acetyl coenzyme A carboxylase (ACC) complex. First, biotin carboxylase catalyzes the carboxylation of biotin on its carrier protein (BCCP) and then the CO(2) group is transferred by the carboxyltransferase to acetyl-CoA to form malonyl-CoA. This Clostridium perfringens (strain SM101 / Type A) protein is Acetyl-coenzyme A carboxylase carboxyl transferase subunit alpha.